A 741-amino-acid chain; its full sequence is Ribosome-releasing factor 2, mitochondrial (741 aa).

A mitochondrion-targeting transit peptide spans 1–29 (MLKYEFLHGLQKRSHYLRQLSGQFFSRSY). The 280-residue stretch at 31–310 (SKIRNIGILA…AVNSYLPAPE (280 aa)) folds into the tr-type G domain. GTP contacts are provided by residues 40–47 (AHIDAGKT), 104–108 (DTPGH), and 158–161 (NKMD).

Belongs to the TRAFAC class translation factor GTPase superfamily. Classic translation factor GTPase family. EF-G/EF-2 subfamily.

Its subcellular location is the mitochondrion. Functionally, mitochondrial GTPase that mediates the disassembly of ribosomes from messenger RNA at the termination of mitochondrial protein biosynthesis. Not involved in the GTP-dependent ribosomal translocation step during translation elongation. This is Ribosome-releasing factor 2, mitochondrial from Drosophila ananassae (Fruit fly).